A 334-amino-acid chain; its full sequence is MKLDEIARLAGVSRTTASYVINGKAKQYRVSDKTVEKVMAVVREHNYHPNAVAAGLRAGRTRSIGLVIPDLENTSYTRIANYLERQARQRGYQLLIACSEDQPDNEMRCIEHLLQRQVDAIIVSTSLPPEHPFYQRWANDPFPIVALDRALDREHFTSVVGADQDDAEMLAEELRKFPAETVLYLGALPELSVSFLREQGFRTAWKDDPREVHFLYANSYEREAAAQLFEKWLETHPMPQALFTTSFALLQGVMDVTLRRDGKLPSDLAIATFGDNELLDFLQCPVLAVAQRHRDVAERVLEIVLASLDEPRKPKPGLTRIKRNLYRRGVLSRS.

One can recognise an HTH lacI-type domain in the interval methionine 1–alanine 58. Positions leucine 3–asparagine 22 form a DNA-binding region, H-T-H motif.

As to quaternary structure, homotetramer.

Functionally, global transcriptional regulator, which plays an important role in the regulation of carbon metabolism. The chain is Catabolite repressor/activator (cra) from Escherichia coli O157:H7.